The primary structure comprises 470 residues: Cyclic AMP-responsive element-binding protein 3-like protein 3 (470 aa).

The Cytoplasmic portion of the chain corresponds to 1 to 319; sequence MDGDISTGKM…TSKPAHAGTC (319 aa). Residues 59-145 form a disordered region; that stretch reads SDSDEFLNSI…PEPPRTQVHE (87 aa). Residues 239–302 enclose the bZIP domain; the sequence is VLKKIRRKIR…LSLLEQLKHL (64 aa). The segment at 241 to 270 is basic motif; it reads KKIRRKIRNKQSAQESRKKKKEYIDGLENR. The tract at residues 281–302 is leucine-zipper; it reads LQRKVLHLEKQNLSLLEQLKHL. A Glycyl lysine isopeptide (Lys-Gly) (interchain with G-Cter in ubiquitin) cross-link involves residue Lys-290. Residues 320-340 traverse the membrane as a helical; Signal-anchor for type II membrane protein segment; it reads IAVLLLSFVLIILPSISPFTA. The Lumenal segment spans residues 341-470; it reads NKVDSPGDFI…RVVQDALGVL (130 aa). Asn-410 and Asn-417 each carry an N-linked (GlcNAc...) asparagine glycan.

It belongs to the bZIP family. ATF subfamily. As to quaternary structure, binds DNA as a dimer. May form homodimers. Interacts with ATF6. Interacts with SYNV1/HRD1; this interaction leads to CREB3L3 ubiquitination and proteasomal degradation. Controlled by regulated intramembrane proteolysis (RIP). Following ER stress a fragment containing the cytoplasmic transcription factor domain is released by proteolysis. The cleavage seems to be performed sequentially by site-1 and site-2 proteases (PS1 and PS2). Post-translationally, N-glycosylation is required for optimal proteolytic activation. In terms of processing, ubiquitinated at Lys-290 by SYNV1/HRD1 via 'Lys-27'-linked ubiquitin.

The protein localises to the endoplasmic reticulum membrane. Its subcellular location is the nucleus. Transcription factor that may act during endoplasmic reticulum stress by activating unfolded protein response target genes. Activated in response to cAMP stimulation. Binds the cAMP response element (CRE). Activates transcription through box-B element and CRE. Seems to function synergistically with ATF6. In acute inflammatory response, may activate expression of acute phase response (APR) genes. May be involved in growth suppression. Regulates FGF21 transcription. Plays a crucial role in the regulation of triglyceride metabolism and is required for the maintenance of normal plasma triglyceride concentrations. The chain is Cyclic AMP-responsive element-binding protein 3-like protein 3 (Creb3l3) from Rattus norvegicus (Rat).